The sequence spans 1414 residues: Calcium-transporting ATPase 2 (1414 aa).

Disordered regions lie at residues 1-231 (MSRN…PSRL) and 265-294 (AVGT…QWRA). The Cytoplasmic portion of the chain corresponds to 1–327 (MSRNNPPPVI…LLMWLAFKDK (327 aa)). 2 stretches are compositionally biased toward low complexity: residues 33–53 (PTPT…PESP) and 75–96 (SPTP…SSSS). Residues 179–189 (DGDRGEDDANK) are compositionally biased toward basic and acidic residues. Positions 190–201 (KGKKDKKGKKGK) are enriched in basic residues. The span at 202-229 (KDKEEPPSAHLDPDKDKTDPTPFREKPS) shows a compositional bias: basic and acidic residues. A helical transmembrane segment spans residues 328 to 348 (VLILLSVAAVVSLALGLYQDL). Over 349–370 (GTPPKIIYNDECPDGCEEAQVD) the chain is Vacuolar. The chain crosses the membrane as a helical span at residues 371 to 391 (WVEGVAIVVAIIIVVLVGSIN). Over 392-541 (DWQKERQFKK…TPLQIKLNHL (150 aa)) the chain is Cytoplasmic. The helical transmembrane segment at 542 to 562 (AELIAKLGGASGLLLFIALMI) threads the bilayer. Residues 563–585 (RFFVQLKTNPDRSANDKAQSFIQ) lie on the Vacuolar side of the membrane. Residues 586 to 606 (ILIIAVTLVVVAVPEGLPLAV) form a helical membrane-spanning segment. The Ca(2+) site is built by V595 and E600. At 607 to 1040 (TLALAFATKR…GRCVNDSVKK (434 aa)) the chain is on the cytoplasmic side. D642 (4-aspartylphosphate intermediate) is an active-site residue. Positions 642 and 644 each coordinate Mg(2+). Residues T644, E737, R779, 909-911 (TGD), R958, and K964 each bind ATP. Residue D983 participates in Mg(2+) binding. Residue N986 coordinates ATP. Residues 1041 to 1061 (FLQFQISVNITAVFITFISAV) traverse the membrane as a helical segment. Position 1049 (N1049) interacts with Ca(2+). At 1062 to 1068 (ASSSEES) the chain is on the vacuolar side. A helical transmembrane segment spans residues 1069–1089 (VLTAVQLLWVNLIMDTFAALA). Ca(2+) is bound by residues N1079 and D1083. The Cytoplasmic segment spans residues 1090 to 1118 (LATDPATESSLDRKPDRKNAPLITVEMFK). The helical transmembrane segment at 1119 to 1139 (MIMVQAIYQIIVCLVLHFAGL) threads the bilayer. At 1140-1153 (KILGLEDNDQNNTE) the chain is on the vacuolar side. A helical transmembrane segment spans residues 1154–1171 (LGALVFNCFVFCQIFNQL). The Cytoplasmic segment spans residues 1172-1191 (NCRRLDRKLNVLEGFWRNWY). A helical membrane pass occupies residues 1192–1212 (FIIIFLIMVGGQILIVEVGGA). E1208 is a binding site for Ca(2+). At 1213–1223 (AFQVTRLGGRD) the chain is on the vacuolar side. Residues 1224-1244 (WGITLVIGALSLPIGALVRLT) traverse the membrane as a helical segment. Over 1245 to 1414 (PTGPFARLLV…GLSSGDANNV (170 aa)) the chain is Cytoplasmic. Positions 1376–1414 (PRTNPDDPLYAKFGLQPPESRGSSVSGAEGLSSGDANNV) are disordered.

The protein belongs to the cation transport ATPase (P-type) (TC 3.A.3) family.

Its subcellular location is the vacuole membrane. It catalyses the reaction Ca(2+)(in) + ATP + H2O = Ca(2+)(out) + ADP + phosphate + H(+). Functionally, this magnesium-dependent enzyme catalyzes the hydrolysis of ATP coupled with the transport of calcium. Transports calcium to the vacuole and participates in the control of cytosolic free calcium. The polypeptide is Calcium-transporting ATPase 2 (Cryptococcus neoformans var. grubii serotype A (strain H99 / ATCC 208821 / CBS 10515 / FGSC 9487) (Filobasidiella neoformans var. grubii)).